The following is a 499-amino-acid chain: Putative protein phosphatase 2C 76 (499 aa).

Positions 1-34 (MRLGCSGRRRRLLRAALLRLVVLVLVAPPRRCAG) are cleaved as a signal peptide. A disordered region spans residues 67–101 (AGSGGEGDGDRRSSSSSPPPPPHPRGCHVAVDRGR). The PPM-type phosphatase domain maps to 92–457 (GCHVAVDRGR…DNVAAVIVPL (366 aa)). Positions 138 and 139 each coordinate Mn(2+). Positions 286-306 (KKTSVVSGKRRRKRNSNNRDD) are disordered. 2 residues coordinate Mn(2+): Asp-397 and Asp-448.

It belongs to the PP2C family. The cofactor is Mg(2+). Requires Mn(2+) as cofactor.

It carries out the reaction O-phospho-L-seryl-[protein] + H2O = L-seryl-[protein] + phosphate. It catalyses the reaction O-phospho-L-threonyl-[protein] + H2O = L-threonyl-[protein] + phosphate. This chain is Putative protein phosphatase 2C 76, found in Oryza sativa subsp. japonica (Rice).